We begin with the raw amino-acid sequence, 177 residues long: tRNA-splicing endonuclease (177 aa).

Residues Tyr114, His123, and Lys154 contribute to the active site.

The protein belongs to the tRNA-intron endonuclease family. Archaeal short subfamily. As to quaternary structure, homotetramer; although the tetramer contains four active sites, only two participate in the cleavage. Therefore, it should be considered as a dimer of dimers.

The catalysed reaction is pretRNA = a 3'-half-tRNA molecule with a 5'-OH end + a 5'-half-tRNA molecule with a 2',3'-cyclic phosphate end + an intron with a 2',3'-cyclic phosphate and a 5'-hydroxyl terminus.. In terms of biological role, endonuclease that removes tRNA introns. Cleaves pre-tRNA at the 5'- and 3'-splice sites to release the intron. The products are an intron and two tRNA half-molecules bearing 2',3' cyclic phosphate and 5'-OH termini. Recognizes a pseudosymmetric substrate in which 2 bulged loops of 3 bases are separated by a stem of 4 bp. The polypeptide is tRNA-splicing endonuclease (Methanococcus maripaludis (strain DSM 14266 / JCM 13030 / NBRC 101832 / S2 / LL)).